Here is a 219-residue protein sequence, read N- to C-terminus: Probable oxidoreductase virH (219 aa).

This sequence belongs to the oxidoreductase OpS7 family.

The protein operates within secondary metabolite biosynthesis. Probable oxidoreductase; part of the gene cluster that mediates the biosynthesis of virensols and trichoxide, fungal natural products that contain or are derived from a salicylaldehyde core. The pathway begins with the synthesis of the reduced chain in virensol C by the highly reducing polyketide synthase virA via condensation of one acetate and 8 malonate units. VirA has interesting programming rules since the first 2 ketides are fully reduced, the 3 following ketides undergo beta-dehydration, and the last 3 ketides are only reduced to beta-hydroxys to yield the trihydroxy portion. The production of aldehyde virensol C by virA alone is surprising, since virA does not contain a reductase (R) domain that is typically associated with reductive product release in HRPKS. The cupin-domain enzyme virC is involved in enhancing virA product turnover. The short-chain dehydrogenase virB then oxidizes the C-7 alcohol of virensol C to a ketone, yielding virensol D. Virensol D is further transformed to salicylaldehyde 5-deoxyaurocitrin by the short-chain dehydrogenase virD. VirD catalyzes the dehydrogenation of C-3 to form the beta-ketone aldehyde, which is followed by the generation of the nucleophilic C-2 that is required for the intramolecular aldol condensation between C-2 and C-7, itself followed by dehydration and aromatization which leads to salicylaldehyde 5-deoxyaurocitrin. While the dehydrogenation of virensol D is definitely catalyzed by virD, the aldol condensation and dehydration may be uncatalyzed or assisted by virD. The short chain dehydrogenase virG then converts salicylaldehyde 5-deoxyaurocitrin into virensol B which is further hydroxylated by the cytochrome P450 monooxygenase virE to yield the hydroquinone virensol A. VirI then may oxidize virensol A to form the quinone, while virH performs the epoxidation. Finally, the two remaining short-chain dehydrogenases, virK and virL, are probably responsible for reducing the ketones to the corresponding alcohols to furnish the epoxycyclohexanol structure in trichoxide. The chain is Probable oxidoreductase virH from Hypocrea virens (strain Gv29-8 / FGSC 10586) (Gliocladium virens).